Here is a 213-residue protein sequence, read N- to C-terminus: MNTLIVNSHPDFSNPYSFTTILQEKFIELYNEHFPNHQLSILNLYDCVLPEITKEVLLSIWSKQRKGLELTADEIVQAKISKDLLEQFKSHHRIVFVSPMHNYNVTARAKTYIDNIFIAGETFKYTENGSVGLMTDDYRLLMLESAGSIYSKGQYSPYEFPVHYLKAIFKDFMAFDDFCVVRAEGTDILDRQVVLDKMNQDLREAFEAFYSKE.

This sequence belongs to the azoreductase type 1 family. As to quaternary structure, homodimer. The cofactor is FMN.

It carries out the reaction 2 a quinone + NADH + H(+) = 2 a 1,4-benzosemiquinone + NAD(+). The enzyme catalyses N,N-dimethyl-1,4-phenylenediamine + anthranilate + 2 NAD(+) = 2-(4-dimethylaminophenyl)diazenylbenzoate + 2 NADH + 2 H(+). Quinone reductase that provides resistance to thiol-specific stress caused by electrophilic quinones. In terms of biological role, also exhibits azoreductase activity. Catalyzes the reductive cleavage of the azo bond in aromatic azo compounds to the corresponding amines. The protein is FMN-dependent NADH:quinone oxidoreductase of Streptococcus agalactiae serotype III (strain NEM316).